The primary structure comprises 347 residues: tRNA(Ile)-lysidine synthase (347 aa).

27–32 lines the ATP pocket; sequence SGGADS. Residues 243 to 263 form a disordered region; that stretch reads AAPASPSHVEGEASAPHDAAH.

It belongs to the tRNA(Ile)-lysidine synthase family.

The protein resides in the cytoplasm. The catalysed reaction is cytidine(34) in tRNA(Ile2) + L-lysine + ATP = lysidine(34) in tRNA(Ile2) + AMP + diphosphate + H(+). Ligates lysine onto the cytidine present at position 34 of the AUA codon-specific tRNA(Ile) that contains the anticodon CAU, in an ATP-dependent manner. Cytidine is converted to lysidine, thus changing the amino acid specificity of the tRNA from methionine to isoleucine. The chain is tRNA(Ile)-lysidine synthase from Nitratidesulfovibrio vulgaris (strain ATCC 29579 / DSM 644 / CCUG 34227 / NCIMB 8303 / VKM B-1760 / Hildenborough) (Desulfovibrio vulgaris).